Here is a 272-residue protein sequence, read N- to C-terminus: MDHRTPTPDNPWLALRNLTPARIALGRTGTSLPTGAQLDFQFAHAQARDAVHLAFDHAGLASQLSDRGRESLVLHSAASDRHQYLQRPDLGRRLNEDSITTLRQHAQANPGGVDLAIVVADGLSALAVHRHTLPFLTRFDEQAAADGWTSAPVVLVQQGRVAVADEVGELLGARMTVMLIGERPGLSSPDSLGLYFTYAPKVGLTDAYRNCISNIRLEGLSYGMAAHRLLYLMREACRRQLSGVNLKDEAEVHSLENEDSASQKGNFLLGKE.

Adenosylcob(III)alamin contacts are provided by Val-161, Glu-182, and Cys-211.

It belongs to the EutC family. In terms of assembly, the basic unit is a heterodimer which dimerizes to form tetramers. The heterotetramers trimerize; 6 large subunits form a core ring with 6 small subunits projecting outwards. Requires adenosylcob(III)alamin as cofactor.

Its subcellular location is the bacterial microcompartment. The enzyme catalyses ethanolamine = acetaldehyde + NH4(+). It functions in the pathway amine and polyamine degradation; ethanolamine degradation. In terms of biological role, catalyzes the deamination of various vicinal amino-alcohols to oxo compounds. Allows this organism to utilize ethanolamine as the sole source of nitrogen and carbon in the presence of external vitamin B12. This Pseudomonas putida (strain ATCC 700007 / DSM 6899 / JCM 31910 / BCRC 17059 / LMG 24140 / F1) protein is Ethanolamine ammonia-lyase small subunit.